A 472-amino-acid polypeptide reads, in one-letter code: Probable diguanylate cyclase DgcF (472 aa).

The next 8 helical transmembrane spans lie at 21–41 (SIAIFALTTLFYFIGAELRLV), 44–64 (LSLFWPLNGVMAGVFARYVWL), 90–110 (VSLAINFSNMMFIVTVALLVV), 128–148 (LFNYCLIAALLCAIVGAIGSV), 167–187 (FSTGVLIVPCMLTLAIPGVLP), 198–218 (IALIVSVIASVVIGGAGSLAF), 237–257 (LLTFVTGAVEIVLVANSVIDI), and 273–293 (LGIATMAICPIMVSFSVAAIN). Positions 330–467 (QHLTVMLLDI…GRNRTSTMRY (138 aa)) constitute a GGDEF domain. Positions 338 and 339 each coordinate Mg(2+). Substrate contacts are provided by asparagine 346, histidine 351, and aspartate 355. Glutamate 381 is a Mg(2+) binding site.

Homodimer. Mg(2+) is required as a cofactor.

Its subcellular location is the cell membrane. The catalysed reaction is 2 GTP = 3',3'-c-di-GMP + 2 diphosphate. Its pathway is purine metabolism; 3',5'-cyclic di-GMP biosynthesis. Its function is as follows. Catalyzes the synthesis of cyclic-di-GMP (c-di-GMP) via the condensation of 2 GTP molecules. This chain is Probable diguanylate cyclase DgcF, found in Escherichia coli O157:H7.